Here is a 93-residue protein sequence, read N- to C-terminus: Parbolysin P2 (93 aa).

2 disulfides stabilise this stretch: Cys-16–Cys-37 and Cys-22–Cys-33.

This sequence belongs to the worm cytolysin family. As to expression, localized within the skin and proboscis and are most readily isolated from body mucus secretions.

Its subcellular location is the secreted. Cytolysin that shows hemolytic activity (on bovine erythrocytes, HC(50)=5.75 mg/ml). This hemolytic activity is completely inhibited by small unilamelar vesicles composed of PC/PG, PC/PI and PC/PS in 1:1 molar ratios (with at least 100 mg/ml concentration). The chain is Parbolysin P2 from Parborlasia corrugatus (Antarctic nemertean worm).